Consider the following 207-residue polypeptide: Putative zinc finger protein 137 (207 aa).

The C2H2-type 1 zinc finger occupies 72–94; sequence CKCNDCHKVFSNATTIANHWRIH. The segment at 100–122 adopts a C2H2-type 2; degenerate zinc-finger fold; sequence YKCNKCGKIFRHRSYLAVYQRTH. The C2H2-type 3; degenerate zinc-finger motif lies at 128 to 150; it reads YKYHDCGKVFSQASSYAKHRRIH. 2 C2H2-type zinc fingers span residues 156–178 and 184–206; these read HKCDDCGKVLTSRSHLIRHQRIH and YKCLKCGKVFSLWALHAEHQKIH.

This sequence belongs to the krueppel C2H2-type zinc-finger protein family.

The protein resides in the nucleus. In terms of biological role, may be involved in transcriptional regulation. In Homo sapiens (Human), this protein is Putative zinc finger protein 137 (ZNF137P).